Reading from the N-terminus, the 588-residue chain is Glutamate--tRNA ligase (588 aa).

The 'HIGH' region motif lies at 112-122 (PNPDFYLHLGS).

This sequence belongs to the class-I aminoacyl-tRNA synthetase family. Glutamate--tRNA ligase type 2 subfamily.

The protein localises to the cytoplasm. It carries out the reaction tRNA(Glu) + L-glutamate + ATP = L-glutamyl-tRNA(Glu) + AMP + diphosphate. In terms of biological role, catalyzes the attachment of glutamate to tRNA(Glu) in a two-step reaction: glutamate is first activated by ATP to form Glu-AMP and then transferred to the acceptor end of tRNA(Glu). The chain is Glutamate--tRNA ligase from Caldivirga maquilingensis (strain ATCC 700844 / DSM 13496 / JCM 10307 / IC-167).